We begin with the raw amino-acid sequence, 311 residues long: Protease HtpX homolog 1 (311 aa).

The next 2 membrane-spanning stretches (helical) occupy residues 12–32 (IIAL…IINF) and 35–55 (FPVI…WLIS). Histidine 137 provides a ligand contact to Zn(2+). Residue glutamate 138 is part of the active site. Zn(2+) is bound at residue histidine 141. The next 2 membrane-spanning stretches (helical) occupy residues 159–179 (ILGF…IFAV) and 184–204 (ILVG…TFFL). Glutamate 216 contributes to the Zn(2+) binding site.

Belongs to the peptidase M48B family. The cofactor is Zn(2+).

It is found in the cell membrane. This is Protease HtpX homolog 1 from Sulfurisphaera tokodaii (strain DSM 16993 / JCM 10545 / NBRC 100140 / 7) (Sulfolobus tokodaii).